The following is a 941-amino-acid chain: Glycine dehydrogenase (decarboxylating) (941 aa).

Lys692 carries the N6-(pyridoxal phosphate)lysine modification.

The protein belongs to the GcvP family. In terms of assembly, the glycine cleavage system is composed of four proteins: P, T, L and H. It depends on pyridoxal 5'-phosphate as a cofactor.

It carries out the reaction N(6)-[(R)-lipoyl]-L-lysyl-[glycine-cleavage complex H protein] + glycine + H(+) = N(6)-[(R)-S(8)-aminomethyldihydrolipoyl]-L-lysyl-[glycine-cleavage complex H protein] + CO2. Its function is as follows. The glycine cleavage system catalyzes the degradation of glycine. The P protein binds the alpha-amino group of glycine through its pyridoxal phosphate cofactor; CO(2) is released and the remaining methylamine moiety is then transferred to the lipoamide cofactor of the H protein. This Mycolicibacterium paratuberculosis (strain ATCC BAA-968 / K-10) (Mycobacterium paratuberculosis) protein is Glycine dehydrogenase (decarboxylating).